Reading from the N-terminus, the 369-residue chain is S-(hydroxymethyl)glutathione dehydrogenase (369 aa).

Residues Cys40, His62, Cys92, Cys95, Cys98, Cys106, and Cys169 each contribute to the Zn(2+) site.

The protein belongs to the zinc-containing alcohol dehydrogenase family. Class-III subfamily. As to quaternary structure, homodimer. Requires Zn(2+) as cofactor.

It localises to the cytoplasm. It carries out the reaction S-(hydroxymethyl)glutathione + NADP(+) = S-formylglutathione + NADPH + H(+). It catalyses the reaction S-(hydroxymethyl)glutathione + NAD(+) = S-formylglutathione + NADH + H(+). The catalysed reaction is a primary alcohol + NAD(+) = an aldehyde + NADH + H(+). The enzyme catalyses a secondary alcohol + NAD(+) = a ketone + NADH + H(+). It carries out the reaction S-nitrosoglutathione + NADH + H(+) = S-(hydroxysulfenamide)glutathione + NAD(+). Functionally, has high formaldehyde dehydrogenase activity in the presence of glutathione and catalyzes the oxidation of normal alcohols in a reaction that is not GSH-dependent. In addition, hemithiolacetals other than those formed from GSH, including omega-thiol fatty acids, also are substrates. Also acts as a S-nitroso-glutathione reductase by catalyzing the NADH-dependent reduction of S-nitrosoglutathione. The sequence is that of S-(hydroxymethyl)glutathione dehydrogenase (frmA) from Escherichia coli O6:H1 (strain CFT073 / ATCC 700928 / UPEC).